We begin with the raw amino-acid sequence, 241 residues long: Penton protein H240R (241 aa).

Belongs to the asfivirus H240R family.

The protein resides in the virion. In terms of biological role, forms the penton at the fivefold vertices of the icosahedral capsid. Together with the minor capsid proteins (p17, p49, and M1249L), forms a complicated network immediately below the outer capsid shell, stabilizing the whole capsid. The polypeptide is Penton protein H240R (African swine fever virus (isolate Tick/Malawi/Lil 20-1/1983) (ASFV)).